A 404-amino-acid chain; its full sequence is S-adenosylmethionine synthase (404 aa).

139-144 provides a ligand contact to ATP; it reads GKGSTD.

The protein belongs to the AdoMet synthase 2 family. Mg(2+) serves as cofactor.

The enzyme catalyses L-methionine + ATP + H2O = S-adenosyl-L-methionine + phosphate + diphosphate. It functions in the pathway amino-acid biosynthesis; S-adenosyl-L-methionine biosynthesis; S-adenosyl-L-methionine from L-methionine: step 1/1. Its function is as follows. Catalyzes the formation of S-adenosylmethionine from methionine and ATP. This is S-adenosylmethionine synthase from Saccharolobus islandicus (strain Y.N.15.51 / Yellowstone #2) (Sulfolobus islandicus).